The chain runs to 83 residues: Mu-conotoxin-like PnMKLT1-014 (83 aa).

An N-terminal signal peptide occupies residues 1 to 22 (MNLTCMMIVAVLFLTAWTFVMA). A propeptide spanning residues 23–50 (DDSNNGLANLFSKSRYEMEDPEPSKLEK) is cleaved from the precursor. 3 disulfide bridges follow: Cys-54–Cys-72, Cys-61–Cys-77, and Cys-71–Cys-82.

The protein belongs to the conotoxin O1 superfamily. In terms of tissue distribution, expressed by the venom duct.

It localises to the secreted. Functionally, mu-conotoxins block voltage-gated sodium channels (Nav). The protein is Mu-conotoxin-like PnMKLT1-014 of Conus pennaceus (Feathered cone).